The following is a 246-amino-acid chain: MSRLEIYSPEGLRLDGRRWNELRRFESSINTHPHAADGSSYMEQGNNKIITLVKGPKEPRLKSQMDTSKALLNVSVNITKFSKFERSKSSHKNERRVLEIQTSLVRMFEKNVMLNIYPRTVIDIEIHVLEQDGGIMGSLINGITLALIDAGISMFDYISGISVGLYDTTPLLDTNSLEENAMSTVTLGVVGKSEKLSLLLVEDKIPLDRLENVLAIGIAGAHRVRDLMDEELRKHAQKRVSNASAR.

It belongs to the RNase PH family. In terms of assembly, component of the RNA exosome complex. Specifically part of the catalytically inactive RNA exosome core complex (Exo-9) which may associate with the catalytic subunits RRP6 and DIS3 in cytoplasmic- and nuclear-specific RNA exosome complex forms. Exo-9 is formed by a hexameric base ring of RNase PH domain-containing subunits and a cap ring consisting of CSL4, RRP4 and RRP40.

The protein resides in the cytoplasm. Its subcellular location is the nucleus. It localises to the nucleolus. Non-catalytic component of the RNA exosome complex which has 3'-&gt;5' exoribonuclease activity and participates in a multitude of cellular RNA processing and degradation events. In the nucleus, the RNA exosome complex is involved in proper maturation of stable RNA species such as rRNA, snRNA and snoRNA, in the elimination of RNA processing by-products and non-coding 'pervasive' transcripts, such as antisense RNA species and cryptic unstable transcripts (CUTs), and of mRNAs with processing defects, thereby limiting or excluding their export to the cytoplasm. In the cytoplasm, the RNA exosome complex is involved in general mRNA turnover and in RNA surveillance pathways, preventing translation of aberrant mRNAs. The catalytic inactive RNA exosome core complex of 9 subunits (Exo-9) is proposed to play a pivotal role in the binding and presentation of RNA for ribonucleolysis, and to serve as a scaffold for the association with catalytic subunits and accessory proteins or complexes. SKI6 is part of the hexameric ring of RNase PH domain-containing subunits proposed to form a central channel which threads RNA substrates for degradation. This is Exosome complex component SKI6 (SKI6) from Saccharomyces cerevisiae (strain ATCC 204508 / S288c) (Baker's yeast).